The sequence spans 151 residues: Ocs element-binding factor 1 (151 aa).

Residues Met-1–Asp-17 are compositionally biased toward polar residues. Residues Met-1–Gln-47 are disordered. Basic and acidic residues predominate over residues Ala-22–Arg-39. The bZIP domain maps to Thr-24–Leu-87. The basic motif stretch occupies residues Arg-26–Lys-45. Residues Leu-52–Leu-59 form a leucine-zipper region.

The protein belongs to the bZIP family. As to expression, roots and shoots of young plants, and basal portion of leaves.

The protein localises to the nucleus. May contribute to developmentally specific patterns of gene expression. Binds specifically to ocs elements which are transcriptional enhancer found in the promoters of several plant genes. OCSBF-1 is able to bind to a site within each half of the ocs element as well as to animal AP-1 and CREB sites. This is Ocs element-binding factor 1 (OBF1) from Zea mays (Maize).